The primary structure comprises 227 residues: Cytochrome c oxidase subunit 2 (227 aa).

At 1–14 (MAYPLQLGFQDATS) the chain is on the mitochondrial intermembrane side. The chain crosses the membrane as a helical span at residues 15–45 (PVMEELLHFHDHTLMIIFLISSLVLYIIMLM). Topologically, residues 46–59 (LTTKLIHTNMMNVQ) are mitochondrial matrix. Residues 60 to 87 (EMEMIWTILPAIILILIALPSLHTLYMM) traverse the membrane as a helical segment. At 88–227 (DEINNPLLTI…YFESWSASLA (140 aa)) the chain is on the mitochondrial intermembrane side. Cu cation contacts are provided by H161, C196, E198, C200, H204, and M207. Mg(2+) is bound at residue E198. Y218 carries the post-translational modification Phosphotyrosine.

Belongs to the cytochrome c oxidase subunit 2 family. As to quaternary structure, component of the cytochrome c oxidase (complex IV, CIV), a multisubunit enzyme composed of 14 subunits. The complex is composed of a catalytic core of 3 subunits MT-CO1, MT-CO2 and MT-CO3, encoded in the mitochondrial DNA, and 11 supernumerary subunits COX4I, COX5A, COX5B, COX6A, COX6B, COX6C, COX7A, COX7B, COX7C, COX8 and NDUFA4, which are encoded in the nuclear genome. The complex exists as a monomer or a dimer and forms supercomplexes (SCs) in the inner mitochondrial membrane with NADH-ubiquinone oxidoreductase (complex I, CI) and ubiquinol-cytochrome c oxidoreductase (cytochrome b-c1 complex, complex III, CIII), resulting in different assemblies (supercomplex SCI(1)III(2)IV(1) and megacomplex MCI(2)III(2)IV(2)). Found in a complex with TMEM177, COA6, COX18, COX20, SCO1 and SCO2. Interacts with TMEM177 in a COX20-dependent manner. Interacts with COX20. Interacts with COX16. Requires Cu cation as cofactor.

Its subcellular location is the mitochondrion inner membrane. The catalysed reaction is 4 Fe(II)-[cytochrome c] + O2 + 8 H(+)(in) = 4 Fe(III)-[cytochrome c] + 2 H2O + 4 H(+)(out). Functionally, component of the cytochrome c oxidase, the last enzyme in the mitochondrial electron transport chain which drives oxidative phosphorylation. The respiratory chain contains 3 multisubunit complexes succinate dehydrogenase (complex II, CII), ubiquinol-cytochrome c oxidoreductase (cytochrome b-c1 complex, complex III, CIII) and cytochrome c oxidase (complex IV, CIV), that cooperate to transfer electrons derived from NADH and succinate to molecular oxygen, creating an electrochemical gradient over the inner membrane that drives transmembrane transport and the ATP synthase. Cytochrome c oxidase is the component of the respiratory chain that catalyzes the reduction of oxygen to water. Electrons originating from reduced cytochrome c in the intermembrane space (IMS) are transferred via the dinuclear copper A center (CU(A)) of subunit 2 and heme A of subunit 1 to the active site in subunit 1, a binuclear center (BNC) formed by heme A3 and copper B (CU(B)). The BNC reduces molecular oxygen to 2 water molecules using 4 electrons from cytochrome c in the IMS and 4 protons from the mitochondrial matrix. This is Cytochrome c oxidase subunit 2 (MT-CO2) from Elephas maximus (Indian elephant).